We begin with the raw amino-acid sequence, 367 residues long: Probable dual-specificity RNA methyltransferase RlmN (367 aa).

Glutamate 92 (proton acceptor) is an active-site residue. One can recognise a Radical SAM core domain in the interval 98-326; that stretch reads QEYGLSVCVT…YDTLKKNGIN (229 aa). Cysteine 105 and cysteine 341 are disulfide-bonded. Positions 112, 116, and 119 each coordinate [4Fe-4S] cluster. S-adenosyl-L-methionine is bound by residues 164 to 165, serine 196, 219 to 221, and asparagine 297; these read GE and SLH. Cysteine 341 (S-methylcysteine intermediate) is an active-site residue.

This sequence belongs to the radical SAM superfamily. RlmN family. [4Fe-4S] cluster serves as cofactor.

The protein resides in the cytoplasm. The catalysed reaction is adenosine(2503) in 23S rRNA + 2 reduced [2Fe-2S]-[ferredoxin] + 2 S-adenosyl-L-methionine = 2-methyladenosine(2503) in 23S rRNA + 5'-deoxyadenosine + L-methionine + 2 oxidized [2Fe-2S]-[ferredoxin] + S-adenosyl-L-homocysteine. It catalyses the reaction adenosine(37) in tRNA + 2 reduced [2Fe-2S]-[ferredoxin] + 2 S-adenosyl-L-methionine = 2-methyladenosine(37) in tRNA + 5'-deoxyadenosine + L-methionine + 2 oxidized [2Fe-2S]-[ferredoxin] + S-adenosyl-L-homocysteine. Functionally, specifically methylates position 2 of adenine 2503 in 23S rRNA and position 2 of adenine 37 in tRNAs. This Listeria monocytogenes serovar 1/2a (strain ATCC BAA-679 / EGD-e) protein is Probable dual-specificity RNA methyltransferase RlmN.